Here is a 496-residue protein sequence, read N- to C-terminus: Beta-amylase (496 aa).

3 residues coordinate substrate: aspartate 54, histidine 94, and aspartate 102. Glutamate 187 acts as the Proton donor in catalysis. Substrate is bound by residues lysine 296, histidine 301, and threonine 343. The Proton acceptor role is filled by glutamate 381. Substrate contacts are provided by residues 382-383 and arginine 421; that span reads NA.

The protein belongs to the glycosyl hydrolase 14 family.

It catalyses the reaction Hydrolysis of (1-&gt;4)-alpha-D-glucosidic linkages in polysaccharides so as to remove successive maltose units from the non-reducing ends of the chains.. In Trifolium repens (Creeping white clover), this protein is Beta-amylase (BMY1).